The sequence spans 245 residues: E3 ubiquitin-protein ligase RNF138 (245 aa).

An RING-type zinc finger spans residues 18 to 58; the sequence is CPVCQEVLKTPVRTAACQHVFCRKCFLTAMRESGIHCPLCR. Zn(2+) contacts are provided by Cys86, Cys89, His101, and Cys105. The C2HC RNF-type zinc finger occupies 86-105; it reads CRCCSKKIKFYRMRHHYKSC. The tract at residues 128 to 154 is disordered; sequence VRSSNRSETSASDNTETYQEDTSSSGH. Thr142 is modified (phosphothreonine). 2 C2H2-type zinc fingers span residues 157 to 180 and 187 to 215; these read FKCP…NSNH and VTCP…NQRH. One can recognise a UIM domain in the interval 225-243; that stretch reads LQLDEETQYQTAVEESFQV.

Interacts with NLK. Interacts with XRCC5/Ku80. Interacts with RBBP8/CtIP. Auto-ubiquitinated.

Its subcellular location is the chromosome. It catalyses the reaction S-ubiquitinyl-[E2 ubiquitin-conjugating enzyme]-L-cysteine + [acceptor protein]-L-lysine = [E2 ubiquitin-conjugating enzyme]-L-cysteine + N(6)-ubiquitinyl-[acceptor protein]-L-lysine.. It functions in the pathway protein modification; protein ubiquitination. Its function is as follows. E3 ubiquitin-protein ligase involved in DNA damage response by promoting DNA resection and homologous recombination. Recruited to sites of double-strand breaks following DNA damage and specifically promotes double-strand break repair via homologous recombination. Two different, non-exclusive, mechanisms have been proposed. According to a report, regulates the choice of double-strand break repair by favoring homologous recombination over non-homologous end joining (NHEJ): acts by mediating ubiquitination of XRCC5/Ku80, leading to remove the Ku complex from DNA breaks, thereby promoting homologous recombination. According to another report, cooperates with UBE2Ds E2 ubiquitin ligases (UBE2D1, UBE2D2, UBE2D3 or UBE2D4) to promote homologous recombination by mediating ubiquitination of RBBP8/CtIP. Together with NLK, involved in the ubiquitination and degradation of TCF/LEF. Also exhibits auto-ubiquitination activity in combination with UBE2K. May act as a negative regulator in the Wnt/beta-catenin-mediated signaling pathway. In Mus musculus (Mouse), this protein is E3 ubiquitin-protein ligase RNF138.